The following is a 37-amino-acid chain: Large ribosomal subunit protein bL36 (37 aa).

It belongs to the bacterial ribosomal protein bL36 family.

This chain is Large ribosomal subunit protein bL36, found in Helicobacter pylori (strain HPAG1).